Here is a 431-residue protein sequence, read N- to C-terminus: Protein EARLY STARVATION 1, chloroplastic (431 aa).

The transit peptide at 1 to 19 (MAACSRGLVARPFDLTARG) directs the protein to the chloroplast. Disordered regions lie at residues 65 to 126 (GNKP…DTGI) and 403 to 431 (GVYPTIDFSASSPAPPSDDPPGMPPSPLE). Positions 415 to 431 (PAPPSDDPPGMPPSPLE) are enriched in pro residues.

This sequence belongs to the ESV1 family.

The protein resides in the plastid. It is found in the chloroplast stroma. Its function is as follows. Binds preferentially to highly ordered alpha-glucans, such as starch and crystalline maltodextrins. Involved in the organization of the starch granule matrix, thus influencing starch turnover by modulating the accessibility of starch polymers to modifying and degrading enzymes. Required for the control of starch degradation in leaves and starch distribution in nonphotosynthetic parts. Promotes gravitropic responses, negative in shoots but positive in roots, by facilitating starch granules (statoliths) formation in hypocotyls and roots columella. Facilitates tight packing of starch granules in grains. The polypeptide is Protein EARLY STARVATION 1, chloroplastic (Oryza sativa subsp. japonica (Rice)).